The chain runs to 122 residues: Large ribosomal subunit protein bL12 (122 aa).

Belongs to the bacterial ribosomal protein bL12 family. In terms of assembly, homodimer. Part of the ribosomal stalk of the 50S ribosomal subunit. Forms a multimeric L10(L12)X complex, where L10 forms an elongated spine to which 2 to 4 L12 dimers bind in a sequential fashion. Binds GTP-bound translation factors.

Forms part of the ribosomal stalk which helps the ribosome interact with GTP-bound translation factors. Is thus essential for accurate translation. This is Large ribosomal subunit protein bL12 from Pasteurella multocida (strain Pm70).